Reading from the N-terminus, the 21-residue chain is Outer membrane protein P2 (21 aa).

As to quaternary structure, disulfide bond interactions within and between MOMP molecules and other components form high molecular-weight oligomers.

It is found in the cell outer membrane. Functionally, structural rigidity of the outer membrane of elementary bodies and porin forming, permitting diffusion of solutes through the intracellular reticulate body membrane. Binds carcinoembryonic antigen (CEA). In Glaesserella parasuis (Haemophilus parasuis), this protein is Outer membrane protein P2.